Reading from the N-terminus, the 150-residue chain is Globin (150 aa).

The Globin domain occupies 11–150; the sequence is PLSAAEKTKI…MICILLRSAY (140 aa). Residues histidine 74 and histidine 106 each coordinate heme b.

Belongs to the globin family. In terms of assembly, monomer.

This is Globin from Lampetra fluviatilis (European river lamprey).